A 390-amino-acid polypeptide reads, in one-letter code: GTPase Obg (390 aa).

The Obg domain occupies 1 to 159 (MKFVDEAAIL…RDILLELLLL (159 aa)). The 174-residue stretch at 160–333 (ADVGMLGLPN…LCWDVMKFIN (174 aa)) folds into the OBG-type G domain. GTP-binding positions include 166-173 (GLPNAGKS), 191-195 (FTTLV), 213-216 (DIPG), 283-286 (NKID), and 314-316 (SAV). Mg(2+)-binding residues include S173 and T193. The span at 366–384 (AEADDDWDDDWDEEDDEGV) shows a compositional bias: acidic residues. The tract at residues 366–390 (AEADDDWDDDWDEEDDEGVEIIYQK) is disordered.

It belongs to the TRAFAC class OBG-HflX-like GTPase superfamily. OBG GTPase family. In terms of assembly, monomer. It depends on Mg(2+) as a cofactor.

It localises to the cytoplasm. In terms of biological role, an essential GTPase which binds GTP, GDP and possibly (p)ppGpp with moderate affinity, with high nucleotide exchange rates and a fairly low GTP hydrolysis rate. Plays a role in control of the cell cycle, stress response, ribosome biogenesis and in those bacteria that undergo differentiation, in morphogenesis control. The chain is GTPase Obg from Serratia proteamaculans (strain 568).